The primary structure comprises 285 residues: Aquaporin-6 (285 aa).

The next 3 membrane-spanning stretches (helical) occupy residues 36-56 (IFWK…VFSC), 76-96 (YCFK…ALLL), and 105-125 (ISLV…CYYG). An NPA 1 motif is present at residues 86 to 88 (NPV). N128 carries N-linked (GlcNAc...) asparagine glycosylation. The next 2 helical transmembrane spans lie at 143 to 163 (VSPA…ILTM) and 177 to 197 (GDSN…SGMA). The NPA 2 motif lies at 206–208 (NPM). A helical membrane pass occupies residues 225 to 245 (YIYWIGPIFGCLLAVFTFDYT).

This sequence belongs to the MIP/aquaporin (TC 1.A.8) family.

The protein resides in the cell membrane. In terms of biological role, probable water-specific aquaporin that may modulate the water content and osmolytes during anhydrobiosis. The polypeptide is Aquaporin-6 (Milnesium tardigradum (Water bear)).